We begin with the raw amino-acid sequence, 193 residues long: Tetrahydromethanopterin S-methyltransferase subunit A 2 (193 aa).

The Cytoplasmic segment spans residues 1–38 (MADKKPTAENWPVVSGDYIVGDPESPVAVTTLASHNED). Residues 39–58 (IPAAAGAAIAGPCKTENLGI) form a helical membrane-spanning segment. Residues 59-193 (EKVVANIISN…SESEKIESEA (135 aa)) are Extracellular-facing. His-84 is a 5-hydroxybenzimidazolylcob(I)amide binding site. The interval 174–193 (SKKSSFVESSSESEKIESEA) is disordered.

Belongs to the MtrA family. As to quaternary structure, the complex is composed of 8 subunits; MtrA, MtrB, MtrC, MtrD, MtrE, MtrF, MtrG and MtrH. The cofactor is 5-hydroxybenzimidazolylcob(I)amide.

It localises to the cell membrane. It catalyses the reaction 5-methyl-5,6,7,8-tetrahydromethanopterin + coenzyme M + 2 Na(+)(in) = 5,6,7,8-tetrahydromethanopterin + methyl-coenzyme M + 2 Na(+)(out). Its pathway is one-carbon metabolism; methanogenesis from CO(2); methyl-coenzyme M from 5,10-methylene-5,6,7,8-tetrahydromethanopterin: step 2/2. Its function is as follows. Part of a complex that catalyzes the formation of methyl-coenzyme M and tetrahydromethanopterin from coenzyme M and methyl-tetrahydromethanopterin. This is an energy-conserving, sodium-ion translocating step. The polypeptide is Tetrahydromethanopterin S-methyltransferase subunit A 2 (Methanobrevibacter ruminantium (strain ATCC 35063 / DSM 1093 / JCM 13430 / OCM 146 / M1) (Methanobacterium ruminantium)).